The primary structure comprises 508 residues: MIVVLDFGSQYTQLIARRLRESGIYAEIVPFFESTENIQKKAPKGLILSGGPASVYAKDAYTPSEKIFDLNLPILGICYGMQYLVDFFGGAVACANEQEFGKAALEIIQDSVIFKGVKAKSLVWMSHMDKVITLPKGFTTIAKSPNSLHCAIESGKVFGLQFHPEVIQSEEGGKILENFALLVCGCEKTWGMQNFAQKEMTRLKEKISDARVLCAVSGGVDSTVVATLLHRAIKDNLIAVFVDHGLLRKNEKEKVQAMFKDLQIPLNTIDAKEIFLSKLKGVSEPELKRKIIGETFIEVFEKEAKKHHLKGKIEFLAQGTLYPDVIESVSVKGPSKVIKSHHNVGGLPEWMDFKLIEPLRELFKDEVRLLGKELGVSQDFLMRHPFPGPGLAVRILGEVSESKIKCLQEADFIFIEELKKANLYDKVWQAFCVLLNAHSVGVMGDNRTYENAICLRAVDASDGMTASFSHLGHSFLEKVSNRITNEVSGINRVVYDITSKPPGTIEWE.

Positions 1–189 constitute a Glutamine amidotransferase type-1 domain; the sequence is MIVVLDFGSQ…ALLVCGCEKT (189 aa). Residue Cys78 is the Nucleophile of the active site. Active-site residues include His163 and Glu165. In terms of domain architecture, GMPS ATP-PPase spans 190–383; the sequence is WGMQNFAQKE…LGVSQDFLMR (194 aa). 217-223 provides a ligand contact to ATP; sequence SGGVDST.

In terms of assembly, homodimer.

It catalyses the reaction XMP + L-glutamine + ATP + H2O = GMP + L-glutamate + AMP + diphosphate + 2 H(+). It functions in the pathway purine metabolism; GMP biosynthesis; GMP from XMP (L-Gln route): step 1/1. Functionally, catalyzes the synthesis of GMP from XMP. In Helicobacter acinonychis (strain Sheeba), this protein is GMP synthase [glutamine-hydrolyzing].